Consider the following 133-residue polypeptide: MIIGIGVDIIEIERVRQAIQNNKNFLSKLFTEREIDYFISRNMNSEVIAGNFAAKEAVSKALGTGIRGFSFKDIEILRNELGKPEVILHNGANLIGNKLVENNNSLRVHLSISHNNSSAIAYSVLEGEYYGNM.

Positions 8 and 56 each coordinate Mg(2+).

Belongs to the P-Pant transferase superfamily. AcpS family. The cofactor is Mg(2+).

Its subcellular location is the cytoplasm. It catalyses the reaction apo-[ACP] + CoA = holo-[ACP] + adenosine 3',5'-bisphosphate + H(+). Transfers the 4'-phosphopantetheine moiety from coenzyme A to a Ser of acyl-carrier-protein. The polypeptide is Holo-[acyl-carrier-protein] synthase (Clostridium perfringens (strain ATCC 13124 / DSM 756 / JCM 1290 / NCIMB 6125 / NCTC 8237 / Type A)).